Here is a 202-residue protein sequence, read N- to C-terminus: Protein U22 (202 aa).

2 helical membrane-spanning segments follow: residues 5-25 and 172-192; these read GWSLAWVSVLYVSVIPSLHII and FVYYCISVYLFAVAVFCSCWF.

The protein resides in the host membrane. In Human herpesvirus 6B (strain Z29) (HHV-6 variant B), this protein is Protein U22 (U22).